Here is a 346-residue protein sequence, read N- to C-terminus: Immunoglobulin heavy constant alpha (346 aa).

Ig-like domains follow at residues 6–96 (PSIF…KSVD), 118–212 (PRLS…VSIT), and 221–323 (PQVH…KSID). An intrachain disulfide couples C26 to C83. N134 carries an N-linked (GlcNAc...) (complex) asparagine glycan. Cystine bridges form between C139–C196 and C243–C306. A glycan (N-linked (GlcNAc...) (complex) asparagine) is linked at N333.

In terms of assembly, immunoglobulins are composed of two identical heavy chains and two identical light chains; disulfide-linked. Monomeric or polymeric. Part of the secretory IgA (sIgA) complex that consists of two, four or five IgA monomers, and two additional non-Ig polypeptides, namely the JCHAIN and the secretory component (the proteolytic product of PIGR). N-glycosylated. N-glycans attached to Asn-134 varies from differentially fucosylated complex and hybrid to sialylated with N-glycoyl neuraminic acid types: GlcNAc2Man3GlcNAc2(Fuc); GlcNAc1Man4GlcNAc2(Fuc); GlcNAc1Man4GlcNAc2; Gal1GlcNAc2Man3GlcNAc2(Fuc); GlcNAc2Man3GlcNAc2; Gal1GlcNAc2Man3GlcNAc2; GlcNAc1Man3GlcNAc2; GlcNAc1Man2GlcNAc2 and NeuGc1Gal1GlcNAc2Man3GlcNAc2(Fuc). N-glycans attached to Asn-333 are mainly fucosylated complex types: GlcNAc2Man3GlcNAc2; GlcNAc1Man3GlcNAc2; GlcNAc1Man3GlcNAc2(Fuc); GlcNAc2Man3GlcNAc2(Fuc); Gal1GlcNAc2Man3GlcNAc2(Fuc); NeuGc1Gal1GlcNAc1Man3GlcNAc2(Fuc); NeuGc1Gal1GlcNAc2Man3GlcNAc2(Fuc) and NeuAc1Gal1GlcNAc2Man3GlcNAc2(Fuc).

Its subcellular location is the secreted. It is found in the cell membrane. In terms of biological role, constant region of immunoglobulin heavy chains. Immunoglobulins, also known as antibodies, are membrane-bound or secreted glycoproteins produced by B lymphocytes. In the recognition phase of humoral immunity, the membrane-bound immunoglobulins serve as receptors which, upon binding of a specific antigen, trigger the clonal expansion and differentiation of B lymphocytes into immunoglobulins-secreting plasma cells. Secreted immunoglobulins mediate the effector phase of humoral immunity, which results in the elimination of bound antigens. The antigen binding site is formed by the variable domain of one heavy chain, together with that of its associated light chain. Thus, each immunoglobulin has two antigen binding sites with remarkable affinity for a particular antigen. The variable domains are assembled by a process called V-(D)-J rearrangement and can then be subjected to somatic hypermutations which, after exposure to antigen and selection, allow affinity maturation for a particular antigen. Ig alpha is the major immunoglobulin class in body secretions. This chain is Immunoglobulin heavy constant alpha (IGHA), found in Equus asinus (Donkey).